A 29-amino-acid chain; its full sequence is Glucagon (29 aa).

This sequence belongs to the glucagon family.

It is found in the secreted. Glucagon plays a key role in glucose metabolism and homeostasis. Regulates blood glucose by increasing gluconeogenesis and decreasing glycolysis. The chain is Glucagon (gcg) from Polypterus senegalus (Senegal bichir).